Consider the following 297-residue polypeptide: NAD kinase (297 aa).

Aspartate 74 (proton acceptor) is an active-site residue. NAD(+)-binding positions include 74–75 (DG), arginine 79, 148–149 (NE), arginine 176, aspartate 178, 189–194 (TAYALS), and glutamine 248.

The protein belongs to the NAD kinase family. A divalent metal cation is required as a cofactor.

It localises to the cytoplasm. It carries out the reaction NAD(+) + ATP = ADP + NADP(+) + H(+). Functionally, involved in the regulation of the intracellular balance of NAD and NADP, and is a key enzyme in the biosynthesis of NADP. Catalyzes specifically the phosphorylation on 2'-hydroxyl of the adenosine moiety of NAD to yield NADP. The polypeptide is NAD kinase (Blochmanniella pennsylvanica (strain BPEN)).